Here is a 940-residue protein sequence, read N- to C-terminus: Inter-alpha-trypsin inhibitor heavy chain H5 (940 aa).

Positions 1–16 (MLPLLGLCFALPLCAG) are cleaved as a signal peptide. The region spanning 35–161 (IPRQVRLLQR…KAAFLLSYEE (127 aa)) is the VIT domain. 2 N-linked (GlcNAc...) asparagine glycosylation sites follow: Asn-97 and Asn-127. A disordered region spans residues 207-227 (NSRQRGSGRGPDDSGPPPSTV). 6 N-linked (GlcNAc...) asparagine glycosylation sites follow: Asn-231, Asn-421, Asn-508, Asn-694, Asn-778, and Asn-795. Residues 295–478 (NVVFVLDSSA…AQLIGFYDEI (184 aa)) form the VWFA domain.

Belongs to the ITIH family.

Its subcellular location is the secreted. Its function is as follows. May act as a tumor suppressor. The sequence is that of Inter-alpha-trypsin inhibitor heavy chain H5 (ITIH5) from Bos taurus (Bovine).